A 194-amino-acid chain; its full sequence is tRNA(Phe) 7-((3-amino-3-carboxypropyl)-4-demethylwyosine(37)-N(4))-methyltransferase 1 (194 aa).

Belongs to the TYW3 family.

It carries out the reaction 4-demethyl-7-[(3S)-3-amino-3-carboxypropyl]wyosine(37) in tRNA(Phe) + S-adenosyl-L-methionine = 7-[(3S)-3-amino-3-carboxypropyl]wyosine(37) in tRNA(Phe) + S-adenosyl-L-homocysteine + H(+). Functionally, S-adenosyl-L-methionine-dependent methyltransferase that acts as a component of the wyosine derivatives biosynthesis pathway. Probably methylates N-4 position of wybutosine-86 to produce wybutosine-72. This chain is tRNA(Phe) 7-((3-amino-3-carboxypropyl)-4-demethylwyosine(37)-N(4))-methyltransferase 1, found in Pyrococcus abyssi (strain GE5 / Orsay).